The following is a 690-amino-acid chain: Probable serine/threonine-protein kinase drkB (690 aa).

The signal sequence occupies residues 1–24 (MKVQIVFFSITVFIFVLFLLSVES). Positions 51-110 (DSKSSEHTTSSSSSSNSKNKGDSSSSSSNSGSSSNSIISGDSNSKDAPTTSSDSLSPATP) are disordered. The segment covering 57–96 (HTTSSSSSSNSKNKGDSSSSSSNSGSSSNSIISGDSNSKD) has biased composition (low complexity). Over residues 97 to 107 (APTTSSDSLSP) the composition is skewed to polar residues. Residues Asn134, Asn180, Asn220, and Asn250 are each glycosylated (N-linked (GlcNAc...) asparagine). The tract at residues 287 to 335 (TITPTPTITPTPTITPTVTPTATPSTTPSTTPTTTPSTPTPTPTKSPYS) is disordered. A compositionally biased stretch (low complexity) spans 296–323 (PTPTITPTVTPTATPSTTPSTTPTTTPS). Residues 346–366 (IIIASSITGGLLISIFSFVFI) form a helical membrane-spanning segment. In terms of domain architecture, Protein kinase spans 391 to 644 (IKIGVRIGKG…EQCLEILESI (254 aa)). ATP is bound by residues 397 to 405 (IGKGNFGEV) and Lys418. Asp514 functions as the Proton acceptor in the catalytic mechanism. The tract at residues 649–690 (FDDIPVNNNNNNNSNNNENNNENNNNSDNNNNDINYSNRVIN) is disordered. Residues 655–681 (NNNNNNNSNNNENNNENNNNSDNNNND) show a composition bias toward low complexity.

The protein belongs to the protein kinase superfamily. TKL Ser/Thr protein kinase family.

It localises to the membrane. It carries out the reaction L-seryl-[protein] + ATP = O-phospho-L-seryl-[protein] + ADP + H(+). The enzyme catalyses L-threonyl-[protein] + ATP = O-phospho-L-threonyl-[protein] + ADP + H(+). The protein is Probable serine/threonine-protein kinase drkB (drkB) of Dictyostelium discoideum (Social amoeba).